Consider the following 1372-residue polypeptide: MKRIRDDVYASGSQFRRPLGSSRGQLCGQSPVHGSGDTEEEEEGGSRRVSQKLTTNDALSYLREVKEMFQDQREKYDRFLEVMKDFKAQRTDTGGVIARVKELFKGHNNLIYGFNTFLPKGYEITLIEEDDALPKKTVEFEQAINFVNKIKMRFKHDEHVYKSFLEILNMYRKENKEIKEVYNEVSILFQGHLDLLEQFTRFLPASLPSHSAAQHSRSQAQQYSDRGSDPPLLHQMQVEKERRRERAVALRGDYSVERYDLNDDKTMVKIQREQRKRLDKENRARRGRDLDDREAGQDNLHHFPEKRKSSRRAEALEAYSGSASHSEKDNLKSMYKQAFVFCEKVKDRLCSQDDYQTFLKCLNIFSNGIIQRKDLQNLVSDLLGKFPDLMDEFNQFFERCESITDGFQRLAGVMSKKLFSSEEQLSRPMKVEEKESEHKPELEAVKETEQCKKEYMGKSIQELDLSDCECCTPSYRLLPADYPIPIASQRSELGAEVLNDHWVSVTSGSEDYSFKHMRRNQYEESLFRCEDDRFELDMLLESVSSAARSAESLLNIITEKKISFSGSFRIEDHFTALNLRCIERLYGDHGLDVIDILNKNPATALPVILTRLKQKQGEWKKCRDDFDKVWANVYAKNHYKSLDHRSFYFKQQDSKNLSAKSLLAEIKELKEKSQNDDDVLLSISAGYRQPINPNLEYEYLNRAIHEDMFKVVQFSCEELCSTKEQLSKVLRLWENFLEAVLGVPPRAKGTDLVEDVVINPKTLDVNHSTSPNGEAAVSSGGDTARLASRKLKSAANGDENSSSGTFKHGIGLLNKDSTGKENLEDVEIANRDGVACSAVKPQKEQETGNEAEKRFGKPIPMDISERAAISSISIPSGAENNHCVVGKEVLPGAHEIQAKPSDTLTDIHHDVDSIETVHSTQGGDVGNSIVLANGLRSDSSKGTRNSDDPEGPSRNEKEEGELSPNGDFEDNFGVYKDHGVKSTSKPENSAEAEVEADAEVENEDDADDVDSENASEASGTESGGDVCSQDEDREEENGEHDEIDGKAESEGEAEGMDPHLLEGESELLPQSERVLLSVRPLSKHVAAVLCDERTKDLQVFYGNDDFYVLFRLHQILYERILYAKRNCSGGELKSKNLKDTNAGDPYARFMRVLYGLLDGSAENTKFEDECRAIIGNQSYVLFTLDKLIYRLVKQLQAIVADEMDNKLLQLYEYEKSRKPGRVIDSVYYENVRVLVHEENIYRLECSSLPSRLSIQLMDNIIEKPEAYAVSMDPTFASYMQTELLSVSSGKKEEGHDIVLQRNLTGLYDLCKAMEGVEVVNGLECKMSCSSYKIAYVLDTEDYFHRKKKKKKTEQLWQRNKVRVERFHRFLSA.

Residues 1–50 (MKRIRDDVYASGSQFRRPLGSSRGQLCGQSPVHGSGDTEEEEEGGSRRVS) are disordered. PAH domains follow at residues 51–121 (QKLT…LPKG) and 136–206 (KTVE…LPAS). The segment covering 210 to 222 (HSAAQHSRSQAQQ) has biased composition (low complexity). Disordered stretches follow at residues 210–244 (HSAAQHSRSQAQQYSDRGSDPPLLHQMQVEKERRR) and 272–323 (REQR…SGSA). Positions 272–315 (REQRKRLDKENRARRGRDLDDREAGQDNLHHFPEKRKSSRRAEA) are enriched in basic and acidic residues. Residues 331–400 (LKSMYKQAFV…DEFNQFFERC (70 aa)) enclose the PAH 3 domain. Disordered stretches follow at residues 764 to 783 (DVNHSTSPNGEAAVSSGGDT), 791 to 817 (LKSAANGDENSSSGTFKHGIGLLNKDS), and 934 to 1056 (GLRS…AEGM). Residues 938–957 (DSSKGTRNSDDPEGPSRNEK) show a composition bias toward basic and acidic residues. Composition is skewed to acidic residues over residues 990-1013 (AEAEVEADAEVENEDDADDVDSEN) and 1028-1042 (SQDEDREEENGEHDE). At serine 1049 the chain carries Phosphoserine.

As to quaternary structure, interacts (via PAH3) with ALY2. Interacts (via PAH2) with TBP1. Interacts with ALY3, GATA21, TRP2, TKI1, VAL1, SKP1B, FBX5 and PUB14.

Its subcellular location is the nucleus. Acts as a transcriptional repressor. A histone deacetylase (HDAC) activity is required for transcription repression. May play a role in telomere stability. This Arabidopsis thaliana (Mouse-ear cress) protein is Paired amphipathic helix protein Sin3-like 1 (SNL1).